Consider the following 697-residue polypeptide: Potassium-transporting ATPase ATP-binding subunit (697 aa).

4 consecutive transmembrane segments (helical) span residues proline 55–serine 75, serine 79–alanine 99, leucine 245–phenylalanine 265, and valine 271–isoleucine 291. Aspartate 324 serves as the catalytic 4-aspartylphosphate intermediate. ATP-binding positions include aspartate 361, glutamate 365, phenylalanine 393–serine 400, and lysine 412. Mg(2+) contacts are provided by aspartate 535 and aspartate 539. The next 3 membrane-spanning stretches (helical) occupy residues phenylalanine 605–methionine 625, alanine 633–methionine 653, and glycine 677–isoleucine 697.

The protein belongs to the cation transport ATPase (P-type) (TC 3.A.3) family. Type IA subfamily. In terms of assembly, the system is composed of three essential subunits: KdpA, KdpB and KdpC.

It is found in the cell membrane. It catalyses the reaction K(+)(out) + ATP + H2O = K(+)(in) + ADP + phosphate + H(+). In terms of biological role, part of the high-affinity ATP-driven potassium transport (or Kdp) system, which catalyzes the hydrolysis of ATP coupled with the electrogenic transport of potassium into the cytoplasm. This subunit is responsible for energy coupling to the transport system and for the release of the potassium ions to the cytoplasm. The sequence is that of Potassium-transporting ATPase ATP-binding subunit from Bacillus cereus (strain AH820).